We begin with the raw amino-acid sequence, 177 residues long: MSRVAKAPVTVPNGVTVTQNGRQVEVKGSKGTLSFNLHALVELKQEEGKLQLAPAKESKDAWMQAGTARAVLNNLVKGVSEGFERKLQLVGVGYKAAVKGTVVNLNLGYSHPIDYALPEGVTAETPTATEIILKSANKQLLGQVAAEIRAYRSPEPYKGKGVRYSDEVILRKEAKKK.

This sequence belongs to the universal ribosomal protein uL6 family. In terms of assembly, part of the 50S ribosomal subunit.

Functionally, this protein binds to the 23S rRNA, and is important in its secondary structure. It is located near the subunit interface in the base of the L7/L12 stalk, and near the tRNA binding site of the peptidyltransferase center. This chain is Large ribosomal subunit protein uL6, found in Acinetobacter baumannii (strain AB307-0294).